Here is a 198-residue protein sequence, read N- to C-terminus: Recombination protein RecR (198 aa).

The C4-type zinc finger occupies 57-72; sequence CTVCGHITDTDPCYIC. Residues 80 to 175 form the Toprim domain; it reads TTICVVQDPK…KVTRIAHGLP (96 aa).

This sequence belongs to the RecR family.

May play a role in DNA repair. It seems to be involved in an RecBC-independent recombinational process of DNA repair. It may act with RecF and RecO. In Geobacillus sp. (strain WCH70), this protein is Recombination protein RecR.